We begin with the raw amino-acid sequence, 68 residues long: Large ribosomal subunit protein uL29 (68 aa).

It belongs to the universal ribosomal protein uL29 family.

The polypeptide is Large ribosomal subunit protein uL29 (Erythrobacter litoralis (strain HTCC2594)).